The sequence spans 202 residues: Nucleoside triphosphate pyrophosphatase (202 aa).

Residue D79 is the Proton acceptor of the active site.

The protein belongs to the Maf family. Requires a divalent metal cation as cofactor.

The protein resides in the cytoplasm. The enzyme catalyses a ribonucleoside 5'-triphosphate + H2O = a ribonucleoside 5'-phosphate + diphosphate + H(+). The catalysed reaction is a 2'-deoxyribonucleoside 5'-triphosphate + H2O = a 2'-deoxyribonucleoside 5'-phosphate + diphosphate + H(+). In terms of biological role, nucleoside triphosphate pyrophosphatase. May have a dual role in cell division arrest and in preventing the incorporation of modified nucleotides into cellular nucleic acids. In Rhodopseudomonas palustris (strain BisB18), this protein is Nucleoside triphosphate pyrophosphatase.